The following is a 207-amino-acid chain: Small ribosomal subunit protein uS4 (207 aa).

The tract at residues lysine 31–glutamine 55 is disordered. Positions glycine 42–glycine 53 are enriched in polar residues. In terms of domain architecture, S4 RNA-binding spans serine 97–leucine 160.

It belongs to the universal ribosomal protein uS4 family. Part of the 30S ribosomal subunit. Contacts protein S5. The interaction surface between S4 and S5 is involved in control of translational fidelity.

One of the primary rRNA binding proteins, it binds directly to 16S rRNA where it nucleates assembly of the body of the 30S subunit. Its function is as follows. With S5 and S12 plays an important role in translational accuracy. In Paraburkholderia phymatum (strain DSM 17167 / CIP 108236 / LMG 21445 / STM815) (Burkholderia phymatum), this protein is Small ribosomal subunit protein uS4.